The chain runs to 177 residues: Inorganic pyrophosphatase (177 aa).

3 residues coordinate substrate: Lys31, Arg45, and Tyr57. Mg(2+) contacts are provided by Asp67, Asp72, and Asp104. Tyr141 lines the substrate pocket.

It belongs to the PPase family. Homohexamer. It depends on Mg(2+) as a cofactor.

Its subcellular location is the cytoplasm. It carries out the reaction diphosphate + H2O = 2 phosphate + H(+). Its function is as follows. Catalyzes the hydrolysis of inorganic pyrophosphate (PPi) forming two phosphate ions. The polypeptide is Inorganic pyrophosphatase (Halobacterium salinarum (strain ATCC 700922 / JCM 11081 / NRC-1) (Halobacterium halobium)).